The primary structure comprises 31 residues: Cycloviolacin-O23 (31 aa).

Residues 1–31 (GLPTCGETCFGGTCNTPGCTCDSSWPICTHN) constitute a cross-link (cyclopeptide (Gly-Asn)). 3 cysteine pairs are disulfide-bonded: cysteine 5-cysteine 19, cysteine 9-cysteine 21, and cysteine 14-cysteine 28.

Post-translationally, this is a cyclic peptide. In terms of tissue distribution, expressed in leaves but not in petals, petioles, roots and runners (at protein level).

Functionally, probably participates in a plant defense mechanism. The protein is Cycloviolacin-O23 of Viola odorata (Sweet violet).